Consider the following 386-residue polypeptide: Protein RecA (386 aa).

76 to 83 (GPESSGKT) is a binding site for ATP. The segment at 362–386 (FDDEDDDFDASTAPAGTFTEVTTEN) is disordered.

This sequence belongs to the RecA family.

The protein resides in the cytoplasm. Its function is as follows. Can catalyze the hydrolysis of ATP in the presence of single-stranded DNA, the ATP-dependent uptake of single-stranded DNA by duplex DNA, and the ATP-dependent hybridization of homologous single-stranded DNAs. It interacts with LexA causing its activation and leading to its autocatalytic cleavage. In Corynebacterium efficiens (strain DSM 44549 / YS-314 / AJ 12310 / JCM 11189 / NBRC 100395), this protein is Protein RecA.